The primary structure comprises 204 residues: Holliday junction branch migration complex subunit RuvA (204 aa).

Residues 1–64 (MIGRLQGILL…EDAHLLFGFA (64 aa)) form a domain I region. The segment at 65–143 (QKTDRTLFRE…GVKQSDFFVE (79 aa)) is domain II. A flexible linker region spans residues 144 to 155 (STHIPLSPSIES). The domain III stretch occupies residues 156–204 (HSESSSDEAISALIALGYKPVEAEKMVKRVAKPELTSEQVIREALKAAL).

This sequence belongs to the RuvA family. As to quaternary structure, homotetramer. Forms an RuvA(8)-RuvB(12)-Holliday junction (HJ) complex. HJ DNA is sandwiched between 2 RuvA tetramers; dsDNA enters through RuvA and exits via RuvB. An RuvB hexamer assembles on each DNA strand where it exits the tetramer. Each RuvB hexamer is contacted by two RuvA subunits (via domain III) on 2 adjacent RuvB subunits; this complex drives branch migration. In the full resolvosome a probable DNA-RuvA(4)-RuvB(12)-RuvC(2) complex forms which resolves the HJ.

The protein localises to the cytoplasm. Its function is as follows. The RuvA-RuvB-RuvC complex processes Holliday junction (HJ) DNA during genetic recombination and DNA repair, while the RuvA-RuvB complex plays an important role in the rescue of blocked DNA replication forks via replication fork reversal (RFR). RuvA specifically binds to HJ cruciform DNA, conferring on it an open structure. The RuvB hexamer acts as an ATP-dependent pump, pulling dsDNA into and through the RuvAB complex. HJ branch migration allows RuvC to scan DNA until it finds its consensus sequence, where it cleaves and resolves the cruciform DNA. The chain is Holliday junction branch migration complex subunit RuvA from Haemophilus influenzae (strain PittEE).